Reading from the N-terminus, the 264-residue chain is Polyneuridine aldehyde esterase (264 aa).

Positions 1-6 are excised as a propeptide; that stretch reads MHSAAN. One can recognise an AB hydrolase-1 domain in the interval 12–122; sequence HFVLVHGGCL…MMPDPNHSLT (111 aa). Active-site residues include Ser87, Asp216, and His244. Residue Ser87 participates in 16-epivellosimine binding.

The protein belongs to the AB hydrolase superfamily. Homodimer; homodimerizes in aqueous solutions at pH 7.0. Mainly expressed in roots and, to a lower level, in leaves.

It carries out the reaction polyneuridine aldehyde + H2O = 16-epivellosimine + methanol + CO2. It functions in the pathway alkaloid biosynthesis; ajmaline biosynthesis. Its activity is regulated as follows. Inhibited by DEPC and HgCl(2). In terms of biological role, hydrolase involved in the biosynthesis of ajmaline-type monoterpenoid indole alkaloids (MIAs) natural products, important plant-derived pharmaceuticals used in the therapy of heart disorders. Catalyzes the hydrolysis of polyneuridine aldehyde into epi-vellosimine, precursor of vomilenine, an intermediate chemical in the biosynthesis of ajmaline. This chain is Polyneuridine aldehyde esterase, found in Rauvolfia serpentina (Serpentine wood).